A 416-amino-acid polypeptide reads, in one-letter code: Adrenocortical dysplasia protein (416 aa).

The short motif at 11–13 (PWI) is the PWI element. Position 25 is a phosphoserine (Ser25). Positions 156 to 245 (ESASSSAGLT…SSTGSSQKAR (90 aa)) are interaction with POT1. The span at 234–251 (ILSSTGSSQKARGTSASP) shows a compositional bias: polar residues. The tract at residues 234-306 (ILSSTGSSQK…TSPPCNSTPS (73 aa)) is disordered. Residues 259 to 272 (SGASVSLLSALATS) are compositionally biased toward low complexity. The segment covering 273 to 292 (DPGQMDSSQSPPAVGSTSPR) has biased composition (polar residues). Phosphoserine is present on residues Ser313 and Ser317. A Glycyl lysine isopeptide (Lys-Gly) (interchain with G-Cter in SUMO2) cross-link involves residue Lys345.

In terms of assembly, component of the shelterin complex (telosome) composed of TERF1, TERF2, TINF2, TERF2IP ACD and POT1. Forms heterodimers with POT1. Identified in a complex with POT1 and single-stranded telomeric DNA. Interacts with STN1 and TINF2. Ubiquitous.

The protein localises to the nucleus. The protein resides in the chromosome. It is found in the telomere. Functionally, component of the shelterin complex (telosome) that is involved in the regulation of telomere length and protection. Shelterin associates with arrays of double-stranded TTAGGG repeats added by telomerase and protects chromosome ends. Without its protective activity, telomeres are no longer hidden from the DNA damage surveillance and chromosome ends are inappropriately processed by DNA repair pathways. Promotes binding of POT1 to single-stranded telomeric DNA. Modulates the inhibitory effects of POT1 on telomere elongation. The ACD-POT1 heterodimer enhances telomere elongation by recruiting telomerase to telomeres and increasing its processivity. May play a role in organogenesis. The polypeptide is Adrenocortical dysplasia protein (Mus musculus (Mouse)).